Here is a 92-residue protein sequence, read N- to C-terminus: Conotoxin Mr15.3 (92 aa).

An N-terminal signal peptide occupies residues 1 to 20 (MSTLKMMLLILLLLLPMATF). Residues 21–53 (DSDGQAIPGGGIPSAVNSRVRGDEKSGRSLEKR) constitute a propeptide that is removed on maturation.

It belongs to the conotoxin N superfamily. Contains 4 disulfide bonds. As to expression, expressed by the venom duct.

Its subcellular location is the secreted. The protein is Conotoxin Mr15.3 of Conus marmoreus (Marble cone).